Here is a 342-residue protein sequence, read N- to C-terminus: MEENKLSGNKPIQLATWSNQMGSPENNGNNANNGSDVQNVIQKALGLIRQLNNNGLMSPMEEEHSQPSSSQETLSVDREINEQGRLRLLMQAKDDNTRKEVGTYSSPMDSAYARENMLNVLQSLVTHLNQAVSQIQQLKFKNMILTSNENNIQSRHEVEDNLQKQQFERMKCQFLLERQSLKDQLRKRENKIVKYKQKIIEKNKKLNNLAKVLNQHAISDTSQIDSFSSSVKKTPSSTTTPQEMKSDMLNTLGILATHVLKDEIDDDSGNQTILQLAAGSISNDCNTTELEITCSPEMGRTITHNRPNTKDESIQDSHGNRTLQLPKMKSFSTIDGSIKDIK.

Disordered stretches follow at residues 1–36 (MEENKLSGNKPIQLATWSNQMGSPENNGNNANNGSD), 57–76 (MSPMEEEHSQPSSSQETLSV), and 299–322 (GRTITHNRPNTKDESIQDSHGNRT). A compositionally biased stretch (polar residues) spans 15–25 (ATWSNQMGSPE). A compositionally biased stretch (basic and acidic residues) spans 308–319 (NTKDESIQDSHG).

In terms of assembly, interacts with FKH1.

Its function is as follows. In concert with FKH1, plays a role in directionality of mating type switching by controlling which donor mating-type locus is inserted into MAT locus during mating type switching. The chain is Protein FDO1 from Saccharomyces cerevisiae (strain ATCC 204508 / S288c) (Baker's yeast).